The chain runs to 404 residues: Multidrug resistance protein MdtG (404 aa).

11 helical membrane passes run 19-39, 56-76, 90-110, 113-133, 144-164, 171-191, 222-242, 254-274, 288-308, 317-337, and 376-396; these read LGCFLTGAAFSLVMPFLPLYV, LVFSITFLFSAIASPFWGGLA, LGMAIVMLLMGMAQNIWQFLI, ALLGLLGGFIPNANALIATQV, TLSTGGVSGALLGPLAGGLLA, PVFFITASVLFICFLLTFFFI, LFVTTLIIQVATGSIAPILTL, IAFISGMIASVPGVAALLSAP, ILIVALIISVLLLIPMSFVQT, FLLGAADGALLPAVQTLLVYN, and AVFCVTAGVVLFNAIYSWNSL.

This sequence belongs to the major facilitator superfamily. DHA1 family. MdtG (TC 2.A.1.2.20) subfamily.

The protein resides in the cell inner membrane. The protein is Multidrug resistance protein MdtG of Salmonella heidelberg (strain SL476).